Here is a 206-residue protein sequence, read N- to C-terminus: LexA repressor (206 aa).

The segment at residues 28–48 (RAEIARELGFRSANAAEEHLK) is a DNA-binding region (H-T-H motif). Catalysis depends on for autocatalytic cleavage activity residues Ser123 and Lys160.

It belongs to the peptidase S24 family. In terms of assembly, homodimer.

It carries out the reaction Hydrolysis of Ala-|-Gly bond in repressor LexA.. Represses a number of genes involved in the response to DNA damage (SOS response), including recA and lexA. In the presence of single-stranded DNA, RecA interacts with LexA causing an autocatalytic cleavage which disrupts the DNA-binding part of LexA, leading to derepression of the SOS regulon and eventually DNA repair. The polypeptide is LexA repressor (Vibrio atlanticus (strain LGP32) (Vibrio splendidus (strain Mel32))).